The primary structure comprises 461 residues: UDP-N-acetylmuramate--L-alanine ligase (461 aa).

111 to 117 (GAHGKTT) contacts ATP.

This sequence belongs to the MurCDEF family.

The protein resides in the cytoplasm. It carries out the reaction UDP-N-acetyl-alpha-D-muramate + L-alanine + ATP = UDP-N-acetyl-alpha-D-muramoyl-L-alanine + ADP + phosphate + H(+). It functions in the pathway cell wall biogenesis; peptidoglycan biosynthesis. In terms of biological role, cell wall formation. The sequence is that of UDP-N-acetylmuramate--L-alanine ligase from Pelotomaculum thermopropionicum (strain DSM 13744 / JCM 10971 / SI).